A 246-amino-acid polypeptide reads, in one-letter code: Probable transcriptional regulatory protein APJL_1171 (246 aa).

This sequence belongs to the TACO1 family.

The protein localises to the cytoplasm. The protein is Probable transcriptional regulatory protein APJL_1171 of Actinobacillus pleuropneumoniae serotype 3 (strain JL03).